The following is a 156-amino-acid chain: MLSNDILRSVRYILKANNNDLVRILALGNVEATAEQIAVWLRKEDEEGFQRCPDIVLSSFLNGLIYEKRGKDESAPALEPERRINNNIVLKKLRIAFSLKTDDILAILTEQQFRVSMPEITAMMRAPDHKNFRECGDQFLRYFLRGLAARQHVKKG.

This is an uncharacterized protein from Escherichia coli (strain K12).